Here is a 371-residue protein sequence, read N- to C-terminus: Aminomethyltransferase (371 aa).

Belongs to the GcvT family. As to quaternary structure, the glycine cleavage system is composed of four proteins: P, T, L and H.

The enzyme catalyses N(6)-[(R)-S(8)-aminomethyldihydrolipoyl]-L-lysyl-[protein] + (6S)-5,6,7,8-tetrahydrofolate = N(6)-[(R)-dihydrolipoyl]-L-lysyl-[protein] + (6R)-5,10-methylene-5,6,7,8-tetrahydrofolate + NH4(+). The glycine cleavage system catalyzes the degradation of glycine. In Nitrosococcus oceani (strain ATCC 19707 / BCRC 17464 / JCM 30415 / NCIMB 11848 / C-107), this protein is Aminomethyltransferase.